A 548-amino-acid chain; its full sequence is Probable thiamine biosynthetic bifunctional enzyme, chloroplastic (548 aa).

Polar residues predominate over residues 1 to 10 (MAAAPQQSVH). The disordered stretch occupies residues 1–40 (MAAAPQQSVHPSLPSSTSTLRLLISSSPRRPPPPPPRARR). Residues 1–47 (MAAAPQQSVHPSLPSSTSTLRLLISSSPRRPPPPPPRARRYNRLAAS) constitute a chloroplast transit peptide. Over residues 11–28 (PSLPSSTSTLRLLISSSP) the composition is skewed to low complexity. 4-amino-2-methyl-5-(diphosphooxymethyl)pyrimidine-binding positions include 372 to 376 (QLREK) and Asn404. The Mg(2+) site is built by Asp405 and Asp424. Ser443 is a 4-amino-2-methyl-5-(diphosphooxymethyl)pyrimidine binding site. Position 469–471 (469–471 (TST)) interacts with 2-[(2R,5Z)-2-carboxy-4-methylthiazol-5(2H)-ylidene]ethyl phosphate. Lys472 is a 4-amino-2-methyl-5-(diphosphooxymethyl)pyrimidine binding site. 2-[(2R,5Z)-2-carboxy-4-methylthiazol-5(2H)-ylidene]ethyl phosphate contacts are provided by residues Gly499 and 522 to 523 (VS).

Belongs to the thiamine-phosphate synthase family. Mg(2+) is required as a cofactor.

Its subcellular location is the plastid. It is found in the chloroplast. It carries out the reaction 2-[(2R,5Z)-2-carboxy-4-methylthiazol-5(2H)-ylidene]ethyl phosphate + 4-amino-2-methyl-5-(diphosphooxymethyl)pyrimidine + 2 H(+) = thiamine phosphate + CO2 + diphosphate. It catalyses the reaction 2-(2-carboxy-4-methylthiazol-5-yl)ethyl phosphate + 4-amino-2-methyl-5-(diphosphooxymethyl)pyrimidine + 2 H(+) = thiamine phosphate + CO2 + diphosphate. The enzyme catalyses 4-methyl-5-(2-phosphooxyethyl)-thiazole + 4-amino-2-methyl-5-(diphosphooxymethyl)pyrimidine + H(+) = thiamine phosphate + diphosphate. The catalysed reaction is 4-amino-5-hydroxymethyl-2-methylpyrimidine + ATP = 4-amino-2-methyl-5-(phosphooxymethyl)pyrimidine + ADP + H(+). The protein operates within cofactor biosynthesis; thiamine diphosphate biosynthesis; thiamine phosphate from 4-amino-2-methyl-5-diphosphomethylpyrimidine and 4-methyl-5-(2-phosphoethyl)-thiazole: step 1/1. It functions in the pathway cofactor biosynthesis; thiamine diphosphate biosynthesis; 4-amino-2-methyl-5-diphosphomethylpyrimidine from 5-amino-1-(5-phospho-D-ribosyl)imidazole: step 2/3. Its function is as follows. Essential for thiamine biosynthesis. Bifunctional enzyme that catalyzes the phosphorylation of hydroxymethylpyrimidine phosphate (HMP-P) to HMP-PP and condenses 4-methyl-5-(beta-hydroxyethyl)thiazole monophosphate (THZ-P) and 2-methyl-4-amino-5-hydroxymethyl pyrimidine pyrophosphate (HMP-PP) to form thiamine monophosphate (TMP). The chain is Probable thiamine biosynthetic bifunctional enzyme, chloroplastic from Oryza sativa subsp. japonica (Rice).